We begin with the raw amino-acid sequence, 292 residues long: Histamine N-methyltransferase (292 aa).

Glutamate 28 serves as a coordination point for substrate. Residues glycine 60, glutamate 89, glutamine 94, serine 120, and isoleucine 142 each coordinate S-adenosyl-L-methionine. Asparagine 283 contributes to the substrate binding site.

The protein belongs to the class I-like SAM-binding methyltransferase superfamily. HNMT family. In terms of assembly, monomer. As to expression, expressed in jejunum, brain &gt; lung, spleen, stomach &gt; liver, kidney.

Its subcellular location is the cytoplasm. It catalyses the reaction histamine + S-adenosyl-L-methionine = N(tau)-methylhistamine + S-adenosyl-L-homocysteine + H(+). In terms of biological role, inactivates histamine by N-methylation. Plays an important role in degrading histamine and in regulating the airway response to histamine. In Cavia porcellus (Guinea pig), this protein is Histamine N-methyltransferase (HNMT).